Reading from the N-terminus, the 556-residue chain is Membrane protein insertase YidC (556 aa).

The next 5 membrane-spanning stretches (helical) occupy residues isoleucine 6–aspartate 26, leucine 332–methionine 352, valine 358–tyrosine 378, leucine 428–leucine 448, and valine 501–valine 521.

It belongs to the OXA1/ALB3/YidC family. Type 1 subfamily. In terms of assembly, interacts with the Sec translocase complex via SecD. Specifically interacts with transmembrane segments of nascent integral membrane proteins during membrane integration.

It is found in the cell inner membrane. Its function is as follows. Required for the insertion and/or proper folding and/or complex formation of integral membrane proteins into the membrane. Involved in integration of membrane proteins that insert both dependently and independently of the Sec translocase complex, as well as at least some lipoproteins. Aids folding of multispanning membrane proteins. The sequence is that of Membrane protein insertase YidC from Legionella pneumophila (strain Paris).